Here is a 63-residue protein sequence, read N- to C-terminus: Protein BP4A (63 aa).

As to expression, pollen specific.

The protein is Protein BP4A (BP4A) of Brassica napus (Rape).